A 199-amino-acid polypeptide reads, in one-letter code: NADH-quinone oxidoreductase subunit C (199 aa).

Belongs to the complex I 30 kDa subunit family. As to quaternary structure, NDH-1 is composed of 14 different subunits. Subunits NuoB, C, D, E, F, and G constitute the peripheral sector of the complex.

Its subcellular location is the cell inner membrane. The catalysed reaction is a quinone + NADH + 5 H(+)(in) = a quinol + NAD(+) + 4 H(+)(out). Functionally, NDH-1 shuttles electrons from NADH, via FMN and iron-sulfur (Fe-S) centers, to quinones in the respiratory chain. The immediate electron acceptor for the enzyme in this species is believed to be ubiquinone. Couples the redox reaction to proton translocation (for every two electrons transferred, four hydrogen ions are translocated across the cytoplasmic membrane), and thus conserves the redox energy in a proton gradient. This is NADH-quinone oxidoreductase subunit C from Cupriavidus pinatubonensis (strain JMP 134 / LMG 1197) (Cupriavidus necator (strain JMP 134)).